The primary structure comprises 993 residues: NACHT, LRR and PYD domains-containing protein 14 (993 aa).

Residues Q81–E403 enclose the NACHT domain. Residue G87 to T94 coordinates ATP. 9 LRR repeats span residues D636–K657, K660–S680, S688–C708, S717–S738, R745–S765, T774–T795, S802–C822, N831–S852, and N859–C879.

The protein belongs to the NLRP family. As to expression, detected in adult ovary and testis. Detected in oocytes and in germ cell elements in seminiferous tubules in adult testis (at protein level).

The protein localises to the cytoplasm. Its function is as follows. May be involved in inflammation and spermatogenesis. This Mus musculus (Mouse) protein is NACHT, LRR and PYD domains-containing protein 14 (Nlrp14).